We begin with the raw amino-acid sequence, 453 residues long: MITLKEALKYSKEELENLKKELNEKAKKEKKLGAYIEQFLDKDLSVSGEGVPVAIKDNISVKGWELTSASKILQGYIAPYDASAIVNLKANGFAPFGRCNMDEFAMGSSTASSCYGKTLNPLNFERVPGGSSGGSAAAVAGGLALASLGSDTGGSVRQPAAFCGCVGFKPSYGRVSRYGLASYSSSLDQIGVLTQNVEDAAILYDAIAGYDKMDSTSANIEFIKTAPNLNANEKLKIAVIENYVNDADTEVKNALLKTIDMLKANGHEIVYKNLLDSKFDIAAYYIIATAEASANLSRYDGVRYGKRSENIQNLKEMYVNTRSEGFGEEVKRRILLGTFVLSSGYYDAYYIKAQKARAFIKAKYEEILQDCDLIFMPVTPTMAFKFDTQKSPMQTYLEDVYTISVNLAGLGGISVPVAKDKEGLNISAQLICKAYDEQTLLDGALSLEQMIKN.

Active-site charge relay system residues include lysine 56 and serine 131. Serine 155 serves as the catalytic Acyl-ester intermediate.

The protein belongs to the amidase family. GatA subfamily. In terms of assembly, heterotrimer of A, B and C subunits.

The catalysed reaction is L-glutamyl-tRNA(Gln) + L-glutamine + ATP + H2O = L-glutaminyl-tRNA(Gln) + L-glutamate + ADP + phosphate + H(+). Its function is as follows. Allows the formation of correctly charged Gln-tRNA(Gln) through the transamidation of misacylated Glu-tRNA(Gln) in organisms which lack glutaminyl-tRNA synthetase. The reaction takes place in the presence of glutamine and ATP through an activated gamma-phospho-Glu-tRNA(Gln). The chain is Glutamyl-tRNA(Gln) amidotransferase subunit A from Campylobacter jejuni subsp. doylei (strain ATCC BAA-1458 / RM4099 / 269.97).